Here is a 266-residue protein sequence, read N- to C-terminus: Enoyl-CoA hydratase EchA19 (266 aa).

Glutamate 120 is a catalytic residue. Lysine 135 bears the N6-succinyllysine mark. Glutamate 140 is a catalytic residue. Lysine 142 is modified (N6-succinyllysine).

This sequence belongs to the enoyl-CoA hydratase/isomerase family. Homotrimer; substrate probably binds in elongated tunnels between the subunits. Succinylated in vitro at pH 8.1, succinylation reduces specific activity of the enzyme 5.5-fold; succinyl-CoA is a downstream by-product of cholesterol degradation. Can be de-succinylated in vitro by NAD-dependent protein deacylase (AC P9WGG3). Succinylation may be a negative feedback regulator of cholesterol metabolism.

The enzyme catalyses (22E)-3-oxochola-4,22-dien-24-oyl-CoA + H2O = (22R)-hydroxy-3-oxo-chol-4-ene-24-oyl-CoA. It participates in steroid metabolism; cholesterol degradation. Its function is as follows. Degradation of the cholesterol side chain involves 3 multistep beta-oxidation cycles, this may be involved in the second cycle. Hydrates 3-OCDO-CoA ((22E)-3-oxo-chol-4,22-dien-24-oyl-CoA) to make (22R)-HOCO-CoA (3-oxo-chol-4-ene-(22R)-hydroxy-24-oyl-CoA). Also acts on octenoyl-CoA. Not active on (E)-3-OCDS-CoA ((E)-3-oxocholest-4,24-dien-26-oyl-CoA) or 3-OPDC-CoA (3-oxo-4,17-pregnadiene-20-carboxyl-CoA). Hydrates the same substrate as ChsH3, but the 2 enzymes make different stereoisomers of the product. This Mycobacterium tuberculosis (strain ATCC 25618 / H37Rv) protein is Enoyl-CoA hydratase EchA19.